The sequence spans 147 residues: Large ribosomal subunit protein bL9 (147 aa).

The protein belongs to the bacterial ribosomal protein bL9 family.

Functionally, binds to the 23S rRNA. The chain is Large ribosomal subunit protein bL9 from Trichlorobacter lovleyi (strain ATCC BAA-1151 / DSM 17278 / SZ) (Geobacter lovleyi).